We begin with the raw amino-acid sequence, 409 residues long: Pentatricopeptide repeat-containing protein At1g31790 (409 aa).

9 PPR repeats span residues 87–121, 122–152, 153–187, 192–226, 229–259, 260–294, 295–330, 331–361, and 363–397; these read NEDI…SIRP, TITF…MPHR, DFHS…SQKG, PSWI…GFID, DSYL…LSNA, NTVA…GIKK, NVSV…GFES, DCLI…SKDE, and SVSC…GIKA.

This sequence belongs to the PPR family. PCMP-A subfamily.

The sequence is that of Pentatricopeptide repeat-containing protein At1g31790 (PCMP-A1) from Arabidopsis thaliana (Mouse-ear cress).